The following is a 481-amino-acid chain: Glutamyl-tRNA(Gln) amidotransferase subunit A (481 aa).

Catalysis depends on charge relay system residues Lys76 and Ser151. Catalysis depends on Ser175, which acts as the Acyl-ester intermediate.

Belongs to the amidase family. GatA subfamily. As to quaternary structure, heterotrimer of A, B and C subunits.

The enzyme catalyses L-glutamyl-tRNA(Gln) + L-glutamine + ATP + H2O = L-glutaminyl-tRNA(Gln) + L-glutamate + ADP + phosphate + H(+). Its function is as follows. Allows the formation of correctly charged Gln-tRNA(Gln) through the transamidation of misacylated Glu-tRNA(Gln) in organisms which lack glutaminyl-tRNA synthetase. The reaction takes place in the presence of glutamine and ATP through an activated gamma-phospho-Glu-tRNA(Gln). This chain is Glutamyl-tRNA(Gln) amidotransferase subunit A, found in Chlorobaculum parvum (strain DSM 263 / NCIMB 8327) (Chlorobium vibrioforme subsp. thiosulfatophilum).